Reading from the N-terminus, the 249-residue chain is Methyl-coenzyme M reductase I subunit gamma (249 aa).

Coenzyme M is bound at residue R120.

This sequence belongs to the methyl-coenzyme M reductase gamma subunit family. MCR is a hexamer of two alpha, two beta, and two gamma chains, forming a dimer of heterotrimers. Coenzyme F430 serves as cofactor.

It localises to the cytoplasm. It carries out the reaction coenzyme B + methyl-coenzyme M = methane + coenzyme M-coenzyme B heterodisulfide. It functions in the pathway one-carbon metabolism; methyl-coenzyme M reduction; methane from methyl-coenzyme M: step 1/1. In terms of biological role, component of the methyl-coenzyme M reductase (MCR) I that catalyzes the reductive cleavage of methyl-coenzyme M (CoM-S-CH3 or 2-(methylthio)ethanesulfonate) using coenzyme B (CoB or 7-mercaptoheptanoylthreonine phosphate) as reductant which results in the production of methane and the mixed heterodisulfide of CoB and CoM (CoM-S-S-CoB). This is the final step in methanogenesis. This is Methyl-coenzyme M reductase I subunit gamma (mcrG) from Methanothermobacter thermautotrophicus (strain ATCC 29096 / DSM 1053 / JCM 10044 / NBRC 100330 / Delta H) (Methanobacterium thermoautotrophicum).